Here is a 331-residue protein sequence, read N- to C-terminus: Neurogenic differentiation factor 4 (331 aa).

The segment at 1-80 (MSKTFVKSKE…GPKKKKMTKA (80 aa)) is disordered. Acidic residues predominate over residues 52-64 (DSIEEEEEEEEDG). The span at 67-79 (PKRRGPKKKKMTK) shows a compositional bias: basic residues. The bHLH domain maps to 87–139 (ARRVKANARERTRMHGLNDALDNLRRVMPCYSKTQKLSKIETLRLARNYIWAL). Positions 246-265 (TPPYEGPLTPPLSISGNFSL) are disordered.

As to quaternary structure, efficient DNA binding requires dimerization with another bHLH protein. Serine or threonine phosphorylation within the basic region may regulate neurogenic activity.

It localises to the nucleus. In terms of biological role, probably acts as a transcriptional activator. Mediates neuronal differentiation. Required for the regulation of amacrine cell fate specification in the retina. The sequence is that of Neurogenic differentiation factor 4 (NEUROD4) from Homo sapiens (Human).